The primary structure comprises 458 residues: tRNA modification GTPase MnmE (458 aa).

Residues arginine 22, glutamate 86, and arginine 125 each coordinate (6S)-5-formyl-5,6,7,8-tetrahydrofolate. Residues 221-379 form the TrmE-type G domain; the sequence is GIRTVILGRP…LEQTITEMFF (159 aa). Asparagine 231 serves as a coordination point for K(+). Residues 231 to 236, 250 to 256, and 275 to 278 each bind GTP; these read NAGKSS, TEIAGTT, and DTAG. Position 235 (serine 235) interacts with Mg(2+). 3 residues coordinate K(+): threonine 250, isoleucine 252, and threonine 255. Mg(2+) is bound at residue threonine 256. A (6S)-5-formyl-5,6,7,8-tetrahydrofolate-binding site is contributed by lysine 458.

Belongs to the TRAFAC class TrmE-Era-EngA-EngB-Septin-like GTPase superfamily. TrmE GTPase family. As to quaternary structure, homodimer. Heterotetramer of two MnmE and two MnmG subunits. Requires K(+) as cofactor.

The protein resides in the cytoplasm. Its function is as follows. Exhibits a very high intrinsic GTPase hydrolysis rate. Involved in the addition of a carboxymethylaminomethyl (cmnm) group at the wobble position (U34) of certain tRNAs, forming tRNA-cmnm(5)s(2)U34. This Lachnoclostridium phytofermentans (strain ATCC 700394 / DSM 18823 / ISDg) (Clostridium phytofermentans) protein is tRNA modification GTPase MnmE.